The following is a 734-amino-acid chain: Amino-acid acetyltransferase, mitochondrial (734 aa).

The segment at 384-433 (YSETSSRSTRAEADSNFNLRDDIPLSSFTEQKSGELEYSPRHQNDSPTQQ) is disordered. Basic and acidic residues-rich tracts occupy residues 392-406 (TRAE…RDDI) and 415-427 (KSGE…RHQN). Positions 555-724 (GVPQISLTDP…YEAVCKTIEP (170 aa)) constitute an N-acetyltransferase domain.

It belongs to the acetyltransferase family.

It is found in the mitochondrion. It carries out the reaction L-glutamate + acetyl-CoA = N-acetyl-L-glutamate + CoA + H(+). The protein operates within amino-acid biosynthesis; L-arginine biosynthesis; N(2)-acetyl-L-ornithine from L-glutamate: step 1/4. Functionally, N-acetylglutamate synthase involved in arginine biosynthesis. The protein is Amino-acid acetyltransferase, mitochondrial (arg2) of Botryotinia fuckeliana (strain B05.10) (Noble rot fungus).